The following is a 147-amino-acid chain: Phospholipase A2 inhibitor subunit A (147 aa).

The 82-residue stretch at 62–143 folds into the C-type lectin domain; that stretch reads EICRQAGGRI…DDNLLVVCEF (82 aa). 2 disulfides stabilise this stretch: C64–C141 and C119–C133. N103 carries N-linked (GlcNAc...) asparagine glycosylation.

This sequence belongs to the alpha-type phospholipase A2 inhibitor family. In terms of assembly, homotrimer; non-covalently linked. Post-translationally, glycosylated. In terms of tissue distribution, expressed by the liver.

Its subcellular location is the secreted. Its function is as follows. Inhibits the enzymatic activity of the acidic phospholipase A2 (PLA2). The chain is Phospholipase A2 inhibitor subunit A from Gloydius brevicaudus siniticus (Chinese mamushi).